The primary structure comprises 331 residues: Spondin-2 (331 aa).

The signal sequence occupies residues 1-26; it reads MENPSPAAALGKALCALLLATLGAAG. The Spondin domain occupies 31–221; sequence GESICSARAL…EITSSSPSHP (191 aa). The cysteines at positions 35 and 171 are disulfide-linked. Residue Glu-141 participates in a divalent metal cation binding. Residues Asp-160, Asp-188, and Asp-192 each contribute to the Ca(2+) site. The TSP type-1 domain occupies 277-331; that stretch reads DCEVSLWSSWGLCGGHCGRLGTKSRTRYVRVQPANNGSPCPELEEEAECVPDNCV. A glycan (C-linked (Man) tryptophan) is linked at Trp-283.

In terms of assembly, monomer. Interacts with integrin. In terms of tissue distribution, expressed in normal lung tissue but not in lung carcinoma cell lines.

The protein localises to the secreted. It localises to the extracellular space. It is found in the extracellular matrix. Functionally, cell adhesion protein that promotes adhesion and outgrowth of hippocampal embryonic neurons. Binds directly to bacteria and their components and functions as an opsonin for macrophage phagocytosis of bacteria. Essential in the initiation of the innate immune response and represents a unique pattern-recognition molecule in the ECM for microbial pathogens. Binds bacterial lipopolysaccharide (LPS). The sequence is that of Spondin-2 (SPON2) from Homo sapiens (Human).